Reading from the N-terminus, the 94-residue chain is Acylphosphatase (94 aa).

The Acylphosphatase-like domain maps to 3-90; sequence RVHVIVEGRV…PDEKQFRIMY (88 aa). Residues R18 and N36 contribute to the active site.

It belongs to the acylphosphatase family.

It catalyses the reaction an acyl phosphate + H2O = a carboxylate + phosphate + H(+). In Geobacillus thermodenitrificans (strain NG80-2), this protein is Acylphosphatase (acyP).